Consider the following 344-residue polypeptide: Dihydroorotate dehydrogenase (quinone) (344 aa).

Residues Ala-61–Lys-65 and Thr-85 each bind FMN. Substrate is bound at residue Lys-65. Asn-110 to Phe-114 serves as a coordination point for substrate. Residues Asn-138 and Asn-171 each contribute to the FMN site. Asn-171 serves as a coordination point for substrate. The active-site Nucleophile is the Ser-174. Position 176 (Asn-176) interacts with substrate. FMN-binding residues include Lys-216 and Thr-244. Asn-245–Thr-246 lines the substrate pocket. Residues Gly-267, Gly-296, and Tyr-317 to Ser-318 each bind FMN.

Belongs to the dihydroorotate dehydrogenase family. Type 2 subfamily. Monomer. It depends on FMN as a cofactor.

It localises to the cell membrane. It carries out the reaction (S)-dihydroorotate + a quinone = orotate + a quinol. The protein operates within pyrimidine metabolism; UMP biosynthesis via de novo pathway; orotate from (S)-dihydroorotate (quinone route): step 1/1. Its function is as follows. Catalyzes the conversion of dihydroorotate to orotate with quinone as electron acceptor. The protein is Dihydroorotate dehydrogenase (quinone) of Psychrobacter cryohalolentis (strain ATCC BAA-1226 / DSM 17306 / VKM B-2378 / K5).